The chain runs to 384 residues: Spermidine/putrescine import ATP-binding protein PotA (384 aa).

The ABC transporter domain occupies 26–260 (ISLEKVSKTY…PATRFVAGFI (235 aa)). Residue 62 to 69 (GPSGCGKT) coordinates ATP.

This sequence belongs to the ABC transporter superfamily. Spermidine/putrescine importer (TC 3.A.1.11.1) family. In terms of assembly, the complex is composed of two ATP-binding proteins (PotA), two transmembrane proteins (PotB and PotC) and a solute-binding protein (PotD).

The protein localises to the cell membrane. It catalyses the reaction ATP + H2O + polyamine-[polyamine-binding protein]Side 1 = ADP + phosphate + polyamineSide 2 + [polyamine-binding protein]Side 1.. In terms of biological role, part of the ABC transporter complex PotABCD involved in spermidine/putrescine import. Responsible for energy coupling to the transport system. This Thermobifida fusca (strain YX) protein is Spermidine/putrescine import ATP-binding protein PotA.